Here is a 342-residue protein sequence, read N- to C-terminus: Phosphate acyltransferase (342 aa).

It belongs to the PlsX family. In terms of assembly, homodimer. Probably interacts with PlsY.

It is found in the cytoplasm. The catalysed reaction is a fatty acyl-[ACP] + phosphate = an acyl phosphate + holo-[ACP]. The protein operates within lipid metabolism; phospholipid metabolism. In terms of biological role, catalyzes the reversible formation of acyl-phosphate (acyl-PO(4)) from acyl-[acyl-carrier-protein] (acyl-ACP). This enzyme utilizes acyl-ACP as fatty acyl donor, but not acyl-CoA. This is Phosphate acyltransferase from Shewanella sp. (strain MR-4).